The sequence spans 246 residues: 2-C-methyl-D-erythritol 4-phosphate cytidylyltransferase (246 aa).

The protein belongs to the IspD/TarI cytidylyltransferase family. IspD subfamily.

It carries out the reaction 2-C-methyl-D-erythritol 4-phosphate + CTP + H(+) = 4-CDP-2-C-methyl-D-erythritol + diphosphate. Its pathway is isoprenoid biosynthesis; isopentenyl diphosphate biosynthesis via DXP pathway; isopentenyl diphosphate from 1-deoxy-D-xylulose 5-phosphate: step 2/6. Catalyzes the formation of 4-diphosphocytidyl-2-C-methyl-D-erythritol from CTP and 2-C-methyl-D-erythritol 4-phosphate (MEP). The polypeptide is 2-C-methyl-D-erythritol 4-phosphate cytidylyltransferase (Chlorobaculum parvum (strain DSM 263 / NCIMB 8327) (Chlorobium vibrioforme subsp. thiosulfatophilum)).